An 880-amino-acid polypeptide reads, in one-letter code: Leucine--tRNA ligase (880 aa).

The 'HIGH' region signature appears at 46 to 56 (PYPSGALHMGH). The 'KMSKS' region motif lies at 638–642 (KMSKS). Lys641 is a binding site for ATP.

Belongs to the class-I aminoacyl-tRNA synthetase family.

It is found in the cytoplasm. The catalysed reaction is tRNA(Leu) + L-leucine + ATP = L-leucyl-tRNA(Leu) + AMP + diphosphate. The chain is Leucine--tRNA ligase from Xanthomonas axonopodis pv. citri (strain 306).